Reading from the N-terminus, the 333-residue chain is Late embryogenesis abundant protein 1 (333 aa).

Disordered regions lie at residues 1-20 (MASRQDRREARAEADARRAA) and 116-246 (KDYT…GQGQ). A coiled-coil region spans residues 3-52 (SRQDRREARAEADARRAAEEIARARDERVMQAEVDARSAADEIARARADR). Composition is skewed to basic and acidic residues over residues 116–163 (KDYT…KDAV), 172–219 (EATK…DATK), and 227–241 (DKARETAATHDDATD).

Belongs to the LEA type 4 family.

The protein is Late embryogenesis abundant protein 1 (LEA1) of Oryza sativa subsp. indica (Rice).